The chain runs to 441 residues: Transcriptional regulatory protein ZraR (441 aa).

Residues 7 to 121 (DILVVDDDIS…NLQATLEKAL (115 aa)) enclose the Response regulatory domain. 4-aspartylphosphate is present on D56. A Sigma-54 factor interaction domain is found at 141-370 (MVGKSPAMQH…LENAVERAVV (230 aa)). The ATP site is built by G172, T173, R329, and R359. The segment at residues 421-440 (KTEAARQLGITRKTLLAKLS) is a DNA-binding region (H-T-H motif).

In terms of processing, phosphorylated by ZraS.

The protein localises to the cytoplasm. Activity of the ZraS/ZraR two-component system is repressed by the zinc-bound form of ZraP, which probably interacts with the periplasmic region of ZraS. In terms of biological role, part of the Zra signaling pathway, an envelope stress response (ESR) system composed of the periplasmic accessory protein ZraP, the histidine kinase ZraS and the transcriptional regulator ZraR. The ZraPSR system contributes to antibiotic resistance and is important for membrane integrity in the presence of membrane-targeting biocides. ZraR is a member of the two-component regulatory system ZraS/ZraR. When activated by ZraS, acts in conjunction with sigma-54 to regulate the expression of zraP in the presence of high Zn(2+) or Pb(2+) concentrations. Also positively autoregulates the expression of the zraSR operon. This chain is Transcriptional regulatory protein ZraR (zraR), found in Escherichia coli O157:H7.